Consider the following 701-residue polypeptide: E3 ubiquitin-protein ligase RNF19B (701 aa).

The interval 1–97 (MGSEKDSESP…PAEPLSTSQA (97 aa)) is disordered. The interval 1–304 (MGSEKDSESP…VCGCEFCWLC (304 aa)) is required for ubiquitin ligase activity and for protection against staurosporin-induced cell death. Positions 57–72 (QQLHQQQQIQQQQLLQ) are enriched in low complexity. The interval 103–323 (ELLECPLCLV…LSPSGCTFWG (221 aa)) is TRIAD supradomain. C107, C110, C130, C133, C194, C199, C216, C221, C226, C229, H234, C239, C273, and C276 together coordinate Zn(2+). The RING-type 1 zinc finger occupies 107–156 (CPLCLVRQPAEQLPELQGCSHRSCLCCLRQYLRIEITESRVQLSCPECAE). The IBR-type zinc finger occupies 174–239 (EKYEEFLLRR…KQAWHPNQTC (66 aa)). Residues 273 to 304 (CPRCGAYIIKMNDGSCNHMTCAVCGCEFCWLC) form an RING-type 2; atypical zinc finger. The active site involves C288. Positions 293, 296, 301, 304, 312, and 319 each coordinate Zn(2+). The next 2 membrane-spanning stretches (helical) occupy residues 340–360 (LIGA…AMVI) and 396–416 (IITA…IMLA). Disordered regions lie at residues 472–495 (LEGA…PGGL) and 658–677 (AELT…HGAP).

This sequence belongs to the RBR family. RNF19 subfamily. As to quaternary structure, interacts with UBE2L3, UBE2L6 and UCKL1.

It is found in the cytoplasmic granule membrane. The protein localises to the endoplasmic reticulum membrane. It carries out the reaction [E2 ubiquitin-conjugating enzyme]-S-ubiquitinyl-L-cysteine + [acceptor protein]-L-lysine = [E2 ubiquitin-conjugating enzyme]-L-cysteine + [acceptor protein]-N(6)-ubiquitinyl-L-lysine.. Its pathway is protein modification; protein ubiquitination. In terms of biological role, E3 ubiquitin-protein ligase which accepts ubiquitin from E2 ubiquitin-conjugating enzymes UBE2L3 and UBE2L6 in the form of a thioester and then directly transfers the ubiquitin to targeted substrates, such as UCKL1. Involved in the cytolytic activity of natural killer cells and cytotoxic T-cells. Protects against staurosporin-induced cell death. The polypeptide is E3 ubiquitin-protein ligase RNF19B (rnf19b) (Danio rerio (Zebrafish)).